The primary structure comprises 235 residues: Segregation and condensation protein A (235 aa).

It belongs to the ScpA family. As to quaternary structure, component of a cohesin-like complex composed of ScpA, ScpB and the Smc homodimer, in which ScpA and ScpB bind to the head domain of Smc. The presence of the three proteins is required for the association of the complex with DNA.

The protein localises to the cytoplasm. Participates in chromosomal partition during cell division. May act via the formation of a condensin-like complex containing Smc and ScpB that pull DNA away from mid-cell into both cell halves. This is Segregation and condensation protein A from Streptococcus uberis (strain ATCC BAA-854 / 0140J).